Here is a 122-residue protein sequence, read N- to C-terminus: Transcription initiation factor IIA subunit 2 (122 aa).

Phosphoserine occurs at positions 95 and 102.

This sequence belongs to the TFIIA subunit 2 family. TFIIA is a heterodimer composed of the large TOA1 and a small TOA2 subunits. Interacts with TBP. Interacts with TAF11. Interacts with KAP122.

It is found in the cytoplasm. Its subcellular location is the nucleus. Functionally, TFIIA is a component of the transcription machinery of RNA polymerase II and plays an important role in transcriptional activation. TFIIA in a complex with TBP mediates transcriptional activity. The chain is Transcription initiation factor IIA subunit 2 (TOA2) from Saccharomyces cerevisiae (strain ATCC 204508 / S288c) (Baker's yeast).